The following is a 198-amino-acid chain: Prolactin (198 aa).

Disulfide bonds link C4/C11, C58/C173, and C190/C198.

This sequence belongs to the somatotropin/prolactin family. Pituitary gland.

It localises to the secreted. The chain is Prolactin from Chelonia mydas (Green sea-turtle).